Here is a 338-residue protein sequence, read N- to C-terminus: Nicotinate-nucleotide--dimethylbenzimidazole phosphoribosyltransferase (338 aa).

Glu-305 acts as the Proton acceptor in catalysis.

The protein belongs to the CobT family.

It carries out the reaction 5,6-dimethylbenzimidazole + nicotinate beta-D-ribonucleotide = alpha-ribazole 5'-phosphate + nicotinate + H(+). The protein operates within nucleoside biosynthesis; alpha-ribazole biosynthesis; alpha-ribazole from 5,6-dimethylbenzimidazole: step 1/2. Catalyzes the synthesis of alpha-ribazole-5'-phosphate from nicotinate mononucleotide (NAMN) and 5,6-dimethylbenzimidazole (DMB). The sequence is that of Nicotinate-nucleotide--dimethylbenzimidazole phosphoribosyltransferase from Rhizobium leguminosarum bv. trifolii (strain WSM2304).